Here is a 953-residue protein sequence, read N- to C-terminus: Nucleotide-binding oligomerization domain-containing protein 1 (953 aa).

The CARD domain occupies 15 to 105; it reads ESHPHIQLLK…AYVDLRPWLL (91 aa). Positions 196–531 constitute an NACHT domain; the sequence is ETIFILGDAG…AFFTAFFLVL (336 aa). Position 202–209 (202–209) interacts with ATP; it reads GDAGVGKS. Residues C558 and C567 are each lipidated (S-palmitoyl cysteine). LRR repeat units lie at residues 632 to 656, 702 to 725, 727 to 750, 755 to 778, 783 to 806, 839 to 862, 867 to 891, 895 to 918, and 923 to 946; these read LKSL…IWML, FPKR…ELQP, FSRL…VLSE, YKIV…YVTK, CKGL…YLAL, HPSL…SLAR, NTSL…LAEM, NQTL…QLAD, and NTGI…VYED. C952 carries the S-palmitoyl cysteine lipid modification.

The protein belongs to the NOD1-NOD2 family. In terms of assembly, homooligomer: homooligomerizes following ligand-binding, promoting RIPK2 recruitment. Interacts (via CARD domain) with RIPK2 (via CARD domain). Following RIPK2 recruitment, RIPK2 homooligomerizes via its CARD domain and forms long filaments named RIPosomes. Interacts with ARHGEF2. Interacts (via CARD domain) with ubiquitin; inhibiting interaction with RIPK2. Interacts with NLRP10 and recruits it to the cell membrane following invasive bacterial infection. Interacts with IFIH1; this interaction promotes transcription of antiviral genes and inhibition of viral replication. Interacts with IRGM; promoting NOD1 degradation. Interacts with ATG16L1. Palmitoylated. Palmitoylation is required for proper recruitment to the bacterial entry site and hence for proper signaling upon cognate peptidoglycan detection. Post-translationally, ubiquitinated. 'Lys-48'-linked polyubiquitination by RNF34 promotes proteasomal degradation and thereby negatively regulates NOD1 for instance in NF-kappa-B activation. In terms of processing, degraded via selective autophagy following interaction with IRGM. IRGM promotes NOD1-RIPK2 RIPosome recruitment to autophagosome membranes, promoting their SQSTM1/p62-dependent autophagic degradation. As to expression, highly expressed in adult heart, skeletal muscle, pancreas, spleen and ovary. Also detected in placenta, lung, liver, kidney, thymus, testis, small intestine and colon.

It is found in the cell membrane. The protein resides in the apical cell membrane. The protein localises to the basolateral cell membrane. Its subcellular location is the cytoplasm. In terms of biological role, pattern recognition receptor (PRR) that detects bacterial peptidoglycan fragments and other danger signals and thus participates in both innate and adaptive immune responses. Specifically recognizes and binds gamma-D-glutamyl-meso-diaminopimelic acid (iE-DAP), a dipeptide present in peptidoglycan of Gram-negative bacteria. Preferentially binds iE-DAP in tripeptide-containing muropeptides (MurNAc-TriDAP or TriDAP). Ligand binding triggers oligomerization that facilitates the binding and subsequent activation of the proximal adapter receptor-interacting RIPK2. Following recruitment, RIPK2 undergoes 'Met-1'- (linear) and 'Lys-63'-linked polyubiquitination by E3 ubiquitin-protein ligases XIAP, BIRC2, BIRC3 and the LUBAC complex, becoming a scaffolding protein for downstream effectors, triggering activation of the NF-kappa-B and MAP kinases signaling. This in turn leads to the transcriptional activation of hundreds of genes involved in immune response. Also acts as a regulator of antiviral response elicited by dsRNA and the expression of RLR pathway members by targeting IFIH1 and TRAF3 to modulate the formation of IFIH1-MAVS and TRAF3-MAVS complexes leading to increased transcription of type I IFNs. Also acts as a regulator of autophagy via its interaction with ATG16L1, possibly by recruiting ATG16L1 at the site of bacterial entry. Besides recognizing pathogens, also involved in the endoplasmic reticulum stress response: acts by sensing and binding to the cytosolic metabolite sphingosine-1-phosphate generated in response to endoplasmic reticulum stress, initiating an inflammation process that leads to activation of the NF-kappa-B and MAP kinases signaling. In addition, plays a role in insulin trafficking in beta cells in a cell-autonomous manner. Mechanistically, upon recognizing cognate ligands, NOD1 and RIPK2 localize to insulin vesicles where they recruit RAB1A to direct insulin trafficking through the cytoplasm. Functionally, in contrast to isoform 1, does not efficiently recognize and bind gamma-D-glutamyl-meso-diaminopimelic acid (iE-DAP) ligand. In Homo sapiens (Human), this protein is Nucleotide-binding oligomerization domain-containing protein 1.